The primary structure comprises 253 residues: Flagellar brake protein YcgR (253 aa).

The PilZ domain maps to 120-239 (QRRDFYRFAT…NEGLINRYVY (120 aa)).

It belongs to the YcgR family. Monomer. Interacts with the flagellar basal bodies.

The protein localises to the bacterial flagellum basal body. Its function is as follows. Acts as a flagellar brake, regulating swimming and swarming in a bis-(3'-5') cyclic diguanylic acid (c-di-GMP)-dependent manner. Binds 1 c-di-GMP dimer per subunit. Increasing levels of c-di-GMP lead to decreased motility. The sequence is that of Flagellar brake protein YcgR from Methylotenera mobilis (strain JLW8 / ATCC BAA-1282 / DSM 17540).